The primary structure comprises 601 residues: Protein FREE1 (601 aa).

Positions 1 to 240 (MQQGDYNSYY…SGEYPAFEDS (240 aa)) are disordered. The segment covering 21 to 35 (TPNPNPNPNPSPPAP) has biased composition (pro residues). Composition is skewed to polar residues over residues 63-79 (DYSN…QNSE) and 125-155 (LSSY…QHQT). Residues 161 to 175 (APPPSSAPAPNPNPA) are compositionally biased toward pro residues. Low complexity predominate over residues 176-197 (PYSSSLYSAPPYSSGGSSIPPS). The span at 214 to 231 (NRSRSDLGSDLYGKRSDS) shows a compositional bias: basic and acidic residues. At Ser218 the chain carries Phosphoserine. The segment at 338–344 (LDGLRML) is nuclear export signal. The segment at 455–515 (DEAVSKCTSC…VCDRCMAEVS (61 aa)) adopts an FYVE-type zinc-finger fold. Zn(2+) contacts are provided by Cys461, Cys464, Cys477, Cys480, Cys485, Cys488, Cys507, and Cys510. Positions 527–552 (RNVSLQSHEDLARKLQEEMERNRKSS) form a coiled coil. Ser530 and Ser533 each carry phosphoserine. Residues 542 to 561 (QEEMERNRKSSSGLREGSGR) form a disordered region.

As to quaternary structure, part of the ESCRT-I complex. Interacts with VPS23A and VPS23B, but not with VPS28 or VPS37. Interacts with IRT1. Interacts with SH3P2. Interacts with SH3P3, but not with SH3P1. Interacts (via N-terminus) with PYL4 and PYR3. Interacts (via C-terminus) with SNRK2D/SNRK2.2, SNRK2I/SNRK2.3, ABF4 and ABI5. Interacts with SINAT1, SINAT2, SINAT3 and SINAT4. Interacts with SINAT5. Component of a phosphoinositide 3-kinase (PI3K) complex containing ATG6, SH3P2 and FREE1. In terms of processing, phosphorylated at Ser-530 and Ser-533 by SNRK2D/SNRK2.2 and SNRK2I/SNRK2.3 in response to abscisic acid (ABA). Phosphorylation is necessary for ABA-induced FREE1 nuclear import. Post-translationally, ubiquitinated by SINAT1, SINAT2, SINAT3 and SINAT4 for subsequent proteasomal degradation. Ubiquitous. Lowest expression in mature seeds.

Its subcellular location is the cytoplasm. The protein localises to the prevacuolar compartment membrane. It localises to the late endosome. The protein resides in the endosome. It is found in the multivesicular body. Its subcellular location is the nucleus. In terms of biological role, endosomal sorting complex required for transport (ESCRT) component regulating multivesicular body (MVB) protein sorting and plant growth. Required for the formation of intra-luminal vesicles (ILVs)in MVBs. Binds to phosphatidylinositol-3-phosphate (PI3P) and ubiquitin. Controls IRT1 recycling to the plasma membrane and impacts the polar delivery of this transporter to the outer plasma membrane domain. Regulates ubiquitin-dependent membrane protein degradation, vacuolar transport, autophagy, and vacuole biogenesis. ESCRT component that binds ubiquitin and regulates vacuolar sorting of proteins. Attenuates abscisic acid (ABA) signaling through RSL1-triggered degradation of the ABA receptors PYR1 and PYL4. Interacts with PYL4 and PYR1, and delivers the ubiquitinated ABA receptors as cargo to the vacuolar degradation pathway. In response to ABA, is phosphorylated by SnRK2 kinases which mediate FREE1 nuclear import. In the nucleus, interacts with the ABA-responsive transcription factors ABF4 and ABI5 to reduce their ability to bind to their cis-regulatory sequences of downstream genes, thus leading to transcriptional inhibition of ABA signaling pathway. Negatively regulates salt stress tolerance via a negative feedback loop involving ABA signaling pathway. In Arabidopsis thaliana (Mouse-ear cress), this protein is Protein FREE1.